The following is a 355-amino-acid chain: Homoserine O-succinyltransferase (355 aa).

Cys146 serves as the catalytic Acyl-thioester intermediate. Residues Lys167 and Ser196 each coordinate substrate. The active-site Proton acceptor is His239. Glu241 is a catalytic residue. Arg253 serves as a coordination point for substrate.

It belongs to the MetA family.

It is found in the cytoplasm. The enzyme catalyses L-homoserine + succinyl-CoA = O-succinyl-L-homoserine + CoA. It functions in the pathway amino-acid biosynthesis; L-methionine biosynthesis via de novo pathway; O-succinyl-L-homoserine from L-homoserine: step 1/1. Its function is as follows. Transfers a succinyl group from succinyl-CoA to L-homoserine, forming succinyl-L-homoserine. The sequence is that of Homoserine O-succinyltransferase from Methylococcus capsulatus (strain ATCC 33009 / NCIMB 11132 / Bath).